The following is a 381-amino-acid chain: Succinyl-diaminopimelate desuccinylase (381 aa).

His-71 is a Zn(2+) binding site. Residue Asp-73 is part of the active site. Asp-104 serves as a coordination point for Zn(2+). Residue Glu-136 is the Proton acceptor of the active site. Positions 137, 166, and 351 each coordinate Zn(2+).

This sequence belongs to the peptidase M20A family. DapE subfamily. As to quaternary structure, homodimer. Requires Zn(2+) as cofactor. Co(2+) serves as cofactor.

It catalyses the reaction N-succinyl-(2S,6S)-2,6-diaminopimelate + H2O = (2S,6S)-2,6-diaminopimelate + succinate. It participates in amino-acid biosynthesis; L-lysine biosynthesis via DAP pathway; LL-2,6-diaminopimelate from (S)-tetrahydrodipicolinate (succinylase route): step 3/3. Its function is as follows. Catalyzes the hydrolysis of N-succinyl-L,L-diaminopimelic acid (SDAP), forming succinate and LL-2,6-diaminopimelate (DAP), an intermediate involved in the bacterial biosynthesis of lysine and meso-diaminopimelic acid, an essential component of bacterial cell walls. This is Succinyl-diaminopimelate desuccinylase from Ehrlichia chaffeensis (strain ATCC CRL-10679 / Arkansas).